The chain runs to 242 residues: Ras-like protein family member 11A (242 aa).

Positions 17–241 (ESSSDYLLPK…SPKVKAPSAL (225 aa)) are small GTPase-like. GTP-binding positions include 34–41 (GAGRVGKS), 81–85 (DTPGG), and 147–150 (NKGD).

The protein belongs to the small GTPase superfamily. Ras family. As to quaternary structure, interacts with UBF/UBTF. Widely expressed. Down-regulated in prostate tumors compared to normal prostate tissue. High levels found in colon tumor and normal colon tissue followed by small intestine, liver, jejunum, ileum, bladder and aorta. Lowest levels observed in endothelial cells.

It is found in the nucleus. Its subcellular location is the nucleolus. The enzyme catalyses GTP + H2O = GDP + phosphate + H(+). In terms of biological role, regulator of rDNA transcription. Acts in cooperation UBF/UBTF and positively regulates RNA polymerase I transcription. This chain is Ras-like protein family member 11A, found in Homo sapiens (Human).